Here is a 395-residue protein sequence, read N- to C-terminus: Terminal nucleotidyltransferase 5B (395 aa).

This sequence belongs to the TENT family.

Its subcellular location is the cytoplasm. It is found in the nucleus. It catalyses the reaction RNA(n) + ATP = RNA(n)-3'-adenine ribonucleotide + diphosphate. In terms of biological role, catalyzes the transfer of one adenosine molecule from an ATP to an mRNA poly(A) tail bearing a 3'-OH terminal group in an ATP hydrolysis-dependent manner and participates in cytoplasmic polyadenylation. May be involved in maintaining the translation efficiency of at least some genes through preventing degradation of their mRNAs. In Xenopus tropicalis (Western clawed frog), this protein is Terminal nucleotidyltransferase 5B.